Reading from the N-terminus, the 214-residue chain is Orotate phosphoribosyltransferase (214 aa).

Residues Arg-125, Lys-126, Lys-129, His-131, and 151–159 each bind 5-phospho-alpha-D-ribose 1-diphosphate; that span reads EDTSTTGNS. Orotate is bound by residues Thr-155 and Arg-183.

This sequence belongs to the purine/pyrimidine phosphoribosyltransferase family. PyrE subfamily. In terms of assembly, homodimer. The cofactor is Mg(2+).

The catalysed reaction is orotidine 5'-phosphate + diphosphate = orotate + 5-phospho-alpha-D-ribose 1-diphosphate. It participates in pyrimidine metabolism; UMP biosynthesis via de novo pathway; UMP from orotate: step 1/2. Functionally, catalyzes the transfer of a ribosyl phosphate group from 5-phosphoribose 1-diphosphate to orotate, leading to the formation of orotidine monophosphate (OMP). The sequence is that of Orotate phosphoribosyltransferase from Tropheryma whipplei (strain Twist) (Whipple's bacillus).